The chain runs to 280 residues: Probable cell division protein WhiA (280 aa).

The H-T-H motif DNA-binding region spans 246–279 (SLEQIAQFFERKYKVQITRSGIQHLNAKLKKLNQ).

It belongs to the WhiA family.

Involved in cell division and chromosome segregation. This chain is Probable cell division protein WhiA, found in Mycoplasma pneumoniae (strain ATCC 29342 / M129 / Subtype 1) (Mycoplasmoides pneumoniae).